A 305-amino-acid chain; its full sequence is Glutaminase (305 aa).

7 residues coordinate substrate: Ser-61, Asn-113, Glu-158, Asn-165, Tyr-189, Tyr-241, and Val-259.

It belongs to the glutaminase family. In terms of assembly, homotetramer.

It carries out the reaction L-glutamine + H2O = L-glutamate + NH4(+). The polypeptide is Glutaminase (Clostridium botulinum (strain ATCC 19397 / Type A)).